A 254-amino-acid chain; its full sequence is Winged helix repair factor 1 (254 aa).

The short motif at 4–21 (KRRLLASEAFGVKRRRAP) is the Bipartite nuclear localization signal element. 3 winged helix domain regions span residues 32-104 (RAGS…GIVF), 120-179 (PCAG…LAVP), and 180-254 (GAGR…LPDT).

This sequence belongs to the STK19 family. In terms of assembly, monomer in solution. Homodimer; when bound to DNA. Component of a transcription-coupled nucleotide excision repair (TC-NER) complex composed of STK19, ERCC6, ERCC8, DDA1, DDB1, ELOF1 and UVSSA which assembles and interacts with the multiprotein RNA polymerase II complex when it stalls at DNA lesions.

It localises to the nucleus. Its function is as follows. DNA-binding protein which is required for efficient transcription-coupled nucleotide excision repair (TC-NER). Acts as part of a TC-NER complex which assembles and interacts with RNA polymerase II (RNAPII) when it stalls at DNA lesions. TC-NER complex subunit UVSSA binds to the GTF2H1/p62 subunit of the TFIIH transcription factor complex, tethering TFIIH to the TC-NER complex. WHR1/STK19 then interacts with the XPD helicase subunit of TFIIH which guides TFIIH to DNA downstream of the stalled RNAPII, ensuring DNA repair. Directly interacts with RNAPII and also binds to downstream DNA. Promotes the timely removal of DNA damage-stalled RNAPII, allowing downstream NER factors to access DNA lesions. Required for monoubiquitination of UVSSA. Regulates repositioning and stabilization of UVSSA within the TC-NER complex. Stimulates ubiquitination of RNAPII complex member RBP1. Also binds to RNA and regulates the expression levels of many mRNAs. The chain is Winged helix repair factor 1 from Mus musculus (Mouse).